Here is a 271-residue protein sequence, read N- to C-terminus: Secretagogin (271 aa).

6 EF-hand domains span residues 8–43 (LDAA…LLKK), 53–88 (KVQG…EDEN), 100–135 (DNSV…LFLQ), 144–179 (KLDE…QENF), 192–227 (ERKS…MMEL), and 235–271 (VDLD…KANP). 5 residues coordinate Ca(2+): aspartate 21, aspartate 23, asparagine 25, tyrosine 27, and glutamate 32. Ca(2+) contacts are provided by aspartate 113, aspartate 115, serine 117, glutamate 124, asparagine 159, aspartate 161, arginine 163, aspartate 168, aspartate 205, serine 207, threonine 209, glutamate 216, aspartate 249, asparagine 251, aspartate 253, lysine 255, and glutamate 260.

The protein localises to the cytoplasm. In Xenopus laevis (African clawed frog), this protein is Secretagogin (scgn).